The primary structure comprises 56 residues: Probable head completion protein 2 (56 aa).

It belongs to the skunalikevirus head completion protein 2 family.

It is found in the virion. In terms of biological role, probably functions as a stopper that is part of the head-tail connector and that locks the viral DNA in the capsid. During assembly, functions as a docking platform which the preassembled tail can bind to. Plays a role in morphogenesis of the virion capsid after genome packaging. The sequence is that of Probable head completion protein 2 from Lactococcus lactis (Lactococcus lactis bacteriophage SK1).